The primary structure comprises 158 residues: Cyclic pyranopterin monophosphate synthase (158 aa).

Residues 75-77 (LCH) and 113-114 (ME) each bind substrate. Aspartate 128 is a catalytic residue.

This sequence belongs to the MoaC family. Homohexamer; trimer of dimers.

It catalyses the reaction (8S)-3',8-cyclo-7,8-dihydroguanosine 5'-triphosphate = cyclic pyranopterin phosphate + diphosphate. The protein operates within cofactor biosynthesis; molybdopterin biosynthesis. In terms of biological role, catalyzes the conversion of (8S)-3',8-cyclo-7,8-dihydroguanosine 5'-triphosphate to cyclic pyranopterin monophosphate (cPMP). This chain is Cyclic pyranopterin monophosphate synthase, found in Histophilus somni (strain 129Pt) (Haemophilus somnus).